The following is a 110-amino-acid chain: UPF0060 membrane protein PBPRB0495 (110 aa).

A run of 4 helical transmembrane segments spans residues 7–27, 33–53, 63–83, and 85–105; these read VGLFFITAIAEIIGCYLPYLW, TIWLLIPAAISLALFAWLLTL, AAYGGVYIFTAILWLWLVDGI, and PTVWDFVGVFVALLGMAIIMF.

This sequence belongs to the UPF0060 family.

It is found in the cell inner membrane. The sequence is that of UPF0060 membrane protein PBPRB0495 from Photobacterium profundum (strain SS9).